The following is a 101-amino-acid chain: NAD(P)H-quinone oxidoreductase subunit 4L, chloroplastic (101 aa).

Transmembrane regions (helical) follow at residues isoleucine 2 to leucine 22, methionine 32 to valine 52, and valine 61 to isoleucine 81.

It belongs to the complex I subunit 4L family. NDH is composed of at least 16 different subunits, 5 of which are encoded in the nucleus.

The protein localises to the plastid. It is found in the chloroplast thylakoid membrane. The enzyme catalyses a plastoquinone + NADH + (n+1) H(+)(in) = a plastoquinol + NAD(+) + n H(+)(out). It catalyses the reaction a plastoquinone + NADPH + (n+1) H(+)(in) = a plastoquinol + NADP(+) + n H(+)(out). NDH shuttles electrons from NAD(P)H:plastoquinone, via FMN and iron-sulfur (Fe-S) centers, to quinones in the photosynthetic chain and possibly in a chloroplast respiratory chain. The immediate electron acceptor for the enzyme in this species is believed to be plastoquinone. Couples the redox reaction to proton translocation, and thus conserves the redox energy in a proton gradient. This is NAD(P)H-quinone oxidoreductase subunit 4L, chloroplastic from Nephroselmis olivacea (Green alga).